Consider the following 395-residue polypeptide: Flap endonuclease 1 (395 aa).

An N-domain region spans residues 1–104 (MGIKHLYQVI…GELAKRSARK (104 aa)). Aspartate 34 provides a ligand contact to Mg(2+). Residues arginine 47 and arginine 70 each coordinate DNA. A Mg(2+)-binding site is contributed by aspartate 86. The disordered stretch occupies residues 99-126 (KRSARKREAHEAHEEAKETGTAEDMEKF). The segment at 122 to 253 (DMEKFSRRTV…NTALKLIREH (132 aa)) is I-domain. Residues glutamate 158, glutamate 160, aspartate 179, and aspartate 181 each coordinate Mg(2+). Position 158 (glutamate 158) interacts with DNA. 2 residues coordinate DNA: glycine 231 and aspartate 233. Aspartate 233 provides a ligand contact to Mg(2+). Positions 341-349 (QQSRLEGFF) are interaction with PCNA. The span at 356–389 (EAEKASLKRKHDEKIEEQKKRKKEEAKAKKEAKA) shows a compositional bias: basic and acidic residues. Positions 356-395 (EAEKASLKRKHDEKIEEQKKRKKEEAKAKKEAKARPRGAV) are disordered.

The protein belongs to the XPG/RAD2 endonuclease family. FEN1 subfamily. In terms of assembly, interacts with PCNA. Three molecules of fen1 bind to one PCNA trimer with each molecule binding to one PCNA monomer. PCNA stimulates the nuclease activity without altering cleavage specificity. The cofactor is Mg(2+). Post-translationally, phosphorylated. Phosphorylation upon DNA damage induces relocalization to the nuclear plasma.

The protein localises to the nucleus. It is found in the nucleolus. It localises to the nucleoplasm. Its subcellular location is the mitochondrion. Functionally, structure-specific nuclease with 5'-flap endonuclease and 5'-3' exonuclease activities involved in DNA replication and repair. During DNA replication, cleaves the 5'-overhanging flap structure that is generated by displacement synthesis when DNA polymerase encounters the 5'-end of a downstream Okazaki fragment. It enters the flap from the 5'-end and then tracks to cleave the flap base, leaving a nick for ligation. Also involved in the long patch base excision repair (LP-BER) pathway, by cleaving within the apurinic/apyrimidinic (AP) site-terminated flap. Acts as a genome stabilization factor that prevents flaps from equilibrating into structures that lead to duplications and deletions. Also possesses 5'-3' exonuclease activity on nicked or gapped double-stranded DNA, and exhibits RNase H activity. Also involved in replication and repair of rDNA and in repairing mitochondrial DNA. This Talaromyces stipitatus (strain ATCC 10500 / CBS 375.48 / QM 6759 / NRRL 1006) (Penicillium stipitatum) protein is Flap endonuclease 1 (fen1).